The sequence spans 426 residues: CAAX prenyl protease 1 homolog (426 aa).

The Lumenal portion of the chain corresponds to 1–3 (MVN). A helical transmembrane segment spans residues 4–24 (YFIISISFFLLEHFYSFYLNF). The Cytoplasmic portion of the chain corresponds to 25–70 (RQSKLLKNLTKVPEYCKDRITQEDFKKSQEYSKAKLDYKTLTSTIQ). A helical membrane pass occupies residues 71–91 (VLTTLLSFYYPVYPYFWNLSL). Topologically, residues 92–106 (ELAEKIGYPNEIIRS) are lumenal. The helical transmembrane segment at 107–127 (CFFFAFTVGVSVITEIPFSYY) threads the bilayer. Topologically, residues 128–150 (YQFILEEKFGYNRMTRTLFIKDK) are cytoplasmic. A helical transmembrane segment spans residues 151-171 (IISTLLMIGFGLPILSLAIFI). The Lumenal portion of the chain corresponds to 172–178 (INWSGPQ). Residues 179-199 (LWFYCWLLLVAITLLSITIYP) form a helical membrane-spanning segment. The Cytoplasmic portion of the chain corresponds to 200-294 (TFIQPLFNKF…GHYKMSHTLK (95 aa)). H282 contacts Zn(2+). The active site involves E283. Residue H286 participates in Zn(2+) binding. Residues 295–315 (QMLLVQVHLVTLLYAFSLLIN) form a helical membrane-spanning segment. Residues 316 to 333 (DDQLYQQFGFVSSKDSVL) are Lumenal-facing. A helical membrane pass occupies residues 334 to 354 (VGLTLFMFLYSPIDRIFSLLI). Residues 355–426 (NIFSRKYEFQ…KVALYKLKNK (72 aa)) are Cytoplasmic-facing. E362 contacts Zn(2+).

It belongs to the peptidase M48B family. The cofactor is Zn(2+).

It is found in the endoplasmic reticulum membrane. It carries out the reaction Hydrolyzes the peptide bond -P2-(S-farnesyl or geranylgeranyl)C-P1'-P2'-P3'-COOH where P1' and P2' are amino acids with aliphatic side chains and P3' is any C-terminal residue.. Its function is as follows. Proteolytically removes the C-terminal three residues of farnesylated proteins. This chain is CAAX prenyl protease 1 homolog (zmpste24), found in Dictyostelium discoideum (Social amoeba).